The following is a 293-amino-acid chain: Bisanhydrobacterioruberin hydratase (293 aa).

The next 7 membrane-spanning stretches (helical) occupy residues 36-56 (IAVV…EGLL), 66-86 (FVLF…FPLV), 89-109 (RAGL…LVGV), 134-154 (FGLP…VLLL), 171-191 (ATVM…GFWI), 199-219 (GVPW…VLLF), and 254-274 (LFYT…GLLW).

The protein belongs to the BABR hydratase family.

The protein localises to the membrane. It carries out the reaction bacterioruberin = bisanhydrobacterioruberin + 2 H2O. The protein operates within carotenoid biosynthesis. In terms of biological role, involved in the biosynthesis of the acyclic C50 carotenoid bacterioruberin (BR). Catalyzes the reaction that introduces hydroxyl groups to C3'' and C3''' of bisanhydrobacterioruberin (BABR) to generate BR. The chain is Bisanhydrobacterioruberin hydratase from Haloarcula japonica (strain ATCC 49778 / DSM 6131 / JCM 7785 / NBRC 101032 / NCIMB 13157 / TR-1).